The sequence spans 561 residues: Lysine--tRNA ligase (561 aa).

Residues Glu409 and Glu416 each contribute to the Mg(2+) site.

Belongs to the class-II aminoacyl-tRNA synthetase family. Homodimer. Mg(2+) is required as a cofactor.

The protein resides in the cytoplasm. The enzyme catalyses tRNA(Lys) + L-lysine + ATP = L-lysyl-tRNA(Lys) + AMP + diphosphate. This Nostoc sp. (strain PCC 7120 / SAG 25.82 / UTEX 2576) protein is Lysine--tRNA ligase.